The following is a 118-amino-acid chain: UPF0102 protein Lxx14785 (118 aa).

This sequence belongs to the UPF0102 family.

This chain is UPF0102 protein Lxx14785, found in Leifsonia xyli subsp. xyli (strain CTCB07).